Here is a 145-residue protein sequence, read N- to C-terminus: Cystin-1 (145 aa).

The disordered stretch occupies residues 1 to 129; sequence MGSGSSRSGR…PEGQSAISYD (129 aa). Glycine 2 is lipidated: N-myristoyl glycine. The Ciliary targeting motif motif lies at 29–33; the sequence is ASEGG. Serine 116 is modified (phosphoserine).

Interacts (when myristoylated) with UNC119 and UNC119B; interaction is required for localization to cilium. As to expression, expressed primarily in the kidney and liver. Expressed at lower levels in the lung, brain and heart.

It is found in the cell projection. Its subcellular location is the cilium membrane. The protein localises to the cytoplasm. It localises to the cytoskeleton. The protein resides in the cilium axoneme. The polypeptide is Cystin-1 (Cys1) (Mus musculus (Mouse)).